Here is a 174-residue protein sequence, read N- to C-terminus: 2-C-methyl-D-erythritol 2,4-cyclodiphosphate synthase (174 aa).

The a divalent metal cation site is built by D13, H15, and H61. 13-15 contributes to the 4-CDP-2-C-methyl-D-erythritol 2-phosphate binding site; sequence DAH. 4-CDP-2-C-methyl-D-erythritol 2-phosphate-binding positions include 75 to 77, 149 to 152, F156, and R159; these read DIG and TTTD.

The protein belongs to the IspF family. Homotrimer. The cofactor is a divalent metal cation.

It catalyses the reaction 4-CDP-2-C-methyl-D-erythritol 2-phosphate = 2-C-methyl-D-erythritol 2,4-cyclic diphosphate + CMP. It functions in the pathway isoprenoid biosynthesis; isopentenyl diphosphate biosynthesis via DXP pathway; isopentenyl diphosphate from 1-deoxy-D-xylulose 5-phosphate: step 4/6. Its function is as follows. Involved in the biosynthesis of isopentenyl diphosphate (IPP) and dimethylallyl diphosphate (DMAPP), two major building blocks of isoprenoid compounds. Catalyzes the conversion of 4-diphosphocytidyl-2-C-methyl-D-erythritol 2-phosphate (CDP-ME2P) to 2-C-methyl-D-erythritol 2,4-cyclodiphosphate (ME-CPP) with a corresponding release of cytidine 5-monophosphate (CMP). The protein is 2-C-methyl-D-erythritol 2,4-cyclodiphosphate synthase of Bifidobacterium longum subsp. infantis (strain ATCC 15697 / DSM 20088 / JCM 1222 / NCTC 11817 / S12).